Consider the following 202-residue polypeptide: Endothelin-1 (202 aa).

The N-terminal stretch at 1-23 (MDYFSMMVSLLLVAFHGAPETAA) is a signal peptide. The segment at 24 to 49 (SGTELSTGAENPGEKPPASAPWRPRR) is disordered. Positions 24–50 (SGTELSTGAENPGEKPPASAPWRPRRS) are excised as a propeptide. Disulfide bonds link Cys53–Cys67 and Cys55–Cys63. A propeptide spanning residues 74–202 (VNTPGHIVPY…EQKVTHNRTH (129 aa)) is cleaved from the precursor. The tract at residues 110–124 (CQCTSPHDKKCWNFC) is endothelin-like.

This sequence belongs to the endothelin/sarafotoxin family.

The protein localises to the secreted. In terms of biological role, endothelins are endothelium-derived vasoconstrictor peptides. Probable ligand for G-protein coupled receptors EDNRA and EDNRB which activates PTK2B, BCAR1, BCAR3 and, GTPases RAP1 and RHOA cascade in glomerular mesangial cells. Also binds the DEAR/FBXW7-AS1 receptor. Promotes mesenteric arterial wall remodeling via activation of ROCK signaling and subsequent colocalization of NFATC3 with F-actin filaments. NFATC3 then translocates to the nucleus where it subsequently promotes the transcription of the smooth muscle hypertrophy and differentiation marker ACTA2. The protein is Endothelin-1 (EDN1) of Oryctolagus cuniculus (Rabbit).